Reading from the N-terminus, the 229-residue chain is 2-phytyl-1,4-naphtoquinone methyltransferase (229 aa).

It belongs to the class I-like SAM-binding methyltransferase superfamily. MenG/UbiE family.

It catalyses the reaction demethylphylloquinol + S-adenosyl-L-methionine = phylloquinol + S-adenosyl-L-homocysteine + H(+). It participates in cofactor biosynthesis; phylloquinone biosynthesis. Its function is as follows. Methyltransferase required for the conversion of 2-phytyl-1,4-beta-naphthoquinol to phylloquinol. The sequence is that of 2-phytyl-1,4-naphtoquinone methyltransferase from Trichormus variabilis (strain ATCC 29413 / PCC 7937) (Anabaena variabilis).